The chain runs to 376 residues: Chaperone protein DnaJ (376 aa).

A J domain is found at 5–69 (DYYEVLGVSK…QKRAQYDQYG (65 aa)). The CR-type zinc-finger motif lies at 133–215 (GKDAEIEIPR…CHGKGRVTKT (83 aa)). Cys-146, Cys-149, Cys-163, Cys-166, Cys-189, Cys-192, Cys-203, and Cys-206 together coordinate Zn(2+). CXXCXGXG motif repeat units follow at residues 146-153 (CDTCHGSG), 163-170 (CSHCGGKG), 189-196 (CQYCNGTG), and 203-210 (CPTCHGKG).

This sequence belongs to the DnaJ family. In terms of assembly, homodimer. The cofactor is Zn(2+).

It is found in the cytoplasm. Functionally, participates actively in the response to hyperosmotic and heat shock by preventing the aggregation of stress-denatured proteins and by disaggregating proteins, also in an autonomous, DnaK-independent fashion. Unfolded proteins bind initially to DnaJ; upon interaction with the DnaJ-bound protein, DnaK hydrolyzes its bound ATP, resulting in the formation of a stable complex. GrpE releases ADP from DnaK; ATP binding to DnaK triggers the release of the substrate protein, thus completing the reaction cycle. Several rounds of ATP-dependent interactions between DnaJ, DnaK and GrpE are required for fully efficient folding. Also involved, together with DnaK and GrpE, in the DNA replication of plasmids through activation of initiation proteins. In Listeria monocytogenes serotype 4b (strain CLIP80459), this protein is Chaperone protein DnaJ.